The sequence spans 277 residues: Phycobilisome rod-core linker polypeptide CpcG1 (277 aa).

One can recognise a PBS-linker domain in the interval 11-189; sequence RTLDQRVVSY…YWRNKEISLS (179 aa).

It belongs to the phycobilisome linker protein family. As to quaternary structure, the phycobilisome is a hemidiscoidal structure that is composed of two distinct substructures: a core complex and a number of rods radiating from the core.

The protein localises to the cellular thylakoid membrane. In terms of biological role, rod-core linker protein required for attachment of phycocyanin to allophycocyanin in cores of phycobilisomes. Its function is as follows. Linker polypeptides determine the state of aggregation and the location of the disk-shaped phycobiliprotein units within the phycobilisome and modulate their spectroscopic properties in order to mediate a directed and optimal energy transfer. This chain is Phycobilisome rod-core linker polypeptide CpcG1 (cpcG1), found in Thermosynechococcus vestitus (strain NIES-2133 / IAM M-273 / BP-1).